We begin with the raw amino-acid sequence, 202 residues long: MSVITSNPWSMVLAIFVINVFYVTFLTMRTILTLKGYRYMAAAVSFLEVLVYVVGLGMVMSSLDQIQNIFAYAFGFSIGILVGMKIEEKLALGYTVVNVTSSEYEIDLPNELRNLGYGVTHYAAHGRDGSRMVMQILTPRRYERKLMETVRNLDEKAFIIAYEPRAIHGGFWTKGVRTRKVKAYEVEEIESVVEHDDEVQSK.

The next 3 membrane-spanning stretches (helical) occupy residues 8-28, 40-60, and 66-86; these read PWSMVLAIFVINVFYVTFLTM, MAAAVSFLEVLVYVVGLGMVM, and IQNIFAYAFGFSIGILVGMKI.

The protein belongs to the UPF0316 family.

Its subcellular location is the cell membrane. This chain is UPF0316 protein SH1041, found in Staphylococcus haemolyticus (strain JCSC1435).